The sequence spans 295 residues: Phosphoribosylaminoimidazole-succinocarboxamide synthase (295 aa).

Belongs to the SAICAR synthetase family.

The enzyme catalyses 5-amino-1-(5-phospho-D-ribosyl)imidazole-4-carboxylate + L-aspartate + ATP = (2S)-2-[5-amino-1-(5-phospho-beta-D-ribosyl)imidazole-4-carboxamido]succinate + ADP + phosphate + 2 H(+). It participates in purine metabolism; IMP biosynthesis via de novo pathway; 5-amino-1-(5-phospho-D-ribosyl)imidazole-4-carboxamide from 5-amino-1-(5-phospho-D-ribosyl)imidazole-4-carboxylate: step 1/2. This Nitrosomonas europaea (strain ATCC 19718 / CIP 103999 / KCTC 2705 / NBRC 14298) protein is Phosphoribosylaminoimidazole-succinocarboxamide synthase.